The chain runs to 270 residues: 4-hydroxy-tetrahydrodipicolinate reductase (270 aa).

NAD(+)-binding positions include 11–16 (GASGRM) and E37. Residue R38 coordinates NADP(+). Residues 101 to 103 (GTT) and 125 to 128 (APNM) contribute to the NAD(+) site. H158 serves as the catalytic Proton donor/acceptor. (S)-2,3,4,5-tetrahydrodipicolinate is bound at residue H159. K162 (proton donor) is an active-site residue. 168–169 (GT) provides a ligand contact to (S)-2,3,4,5-tetrahydrodipicolinate.

It belongs to the DapB family.

It is found in the cytoplasm. It catalyses the reaction (S)-2,3,4,5-tetrahydrodipicolinate + NAD(+) + H2O = (2S,4S)-4-hydroxy-2,3,4,5-tetrahydrodipicolinate + NADH + H(+). It carries out the reaction (S)-2,3,4,5-tetrahydrodipicolinate + NADP(+) + H2O = (2S,4S)-4-hydroxy-2,3,4,5-tetrahydrodipicolinate + NADPH + H(+). Its pathway is amino-acid biosynthesis; L-lysine biosynthesis via DAP pathway; (S)-tetrahydrodipicolinate from L-aspartate: step 4/4. Its function is as follows. Catalyzes the conversion of 4-hydroxy-tetrahydrodipicolinate (HTPA) to tetrahydrodipicolinate. The chain is 4-hydroxy-tetrahydrodipicolinate reductase from Shewanella frigidimarina (strain NCIMB 400).